Here is a 506-residue protein sequence, read N- to C-terminus: Cobyric acid synthase (506 aa).

Positions 251–448 (DITIAIVQLP…LHGLFDSDAF (198 aa)) constitute a GATase cobBQ-type domain. The Nucleophile role is filled by Cys-332. His-440 is an active-site residue.

Belongs to the CobB/CobQ family. CobQ subfamily.

It functions in the pathway cofactor biosynthesis; adenosylcobalamin biosynthesis. Its function is as follows. Catalyzes amidations at positions B, D, E, and G on adenosylcobyrinic A,C-diamide. NH(2) groups are provided by glutamine, and one molecule of ATP is hydrogenolyzed for each amidation. This Salmonella agona (strain SL483) protein is Cobyric acid synthase.